Consider the following 283-residue polypeptide: Stage II sporulation protein Q (283 aa).

Residues 22–42 (WVFPAIYLVSAAVILTAVLWY) form a helical membrane-spanning segment. A disordered region spans residues 228–283 (EKAATQETEESIQQSSEKKDGSTEKGTEEKSGEKKDDSTDKSGSKESSTTEDTEQS). The span at 243-271 (SEKKDGSTEKGTEEKSGEKKDDSTDKSGS) shows a compositional bias: basic and acidic residues.

In terms of assembly, interacts with SpoIIIAH and SpoIIE.

The protein localises to the forespore membrane. Its function is as follows. Involved in forespore engulfment and required for anchoring membrane proteins on the forespore side of the septal membrane. Forms a channel with SpoIIIAH that is open on the forespore end and closed (or gated) on the mother cell end. This allows sigma-E-directed gene expression in the mother-cell compartment of the sporangium to trigger the activation of sigma-G forespore-specific gene expression by a pathway of intercellular signaling. The protein is Stage II sporulation protein Q (spoIIQ) of Bacillus subtilis (strain 168).